Reading from the N-terminus, the 76-residue chain is Cytochrome c oxidase subunit 6C-2 (76 aa).

The Mitochondrial matrix segment spans residues 4 to 14; that stretch reads GALLPKPQMRG. A helical transmembrane segment spans residues 15-55; the sequence is LLAKRLRVHIVGAFVVALGVAAAYKFGVAEPRKKAYADFYR. The Mitochondrial intermembrane segment spans residues 56-76; it reads NYDSMKDFEEMRQAGVFQSAK. At serine 74 the chain carries Phosphoserine.

It belongs to the cytochrome c oxidase subunit 6c family. In terms of assembly, component of the cytochrome c oxidase (complex IV, CIV), a multisubunit enzyme composed of 14 subunits. The complex is composed of a catalytic core of 3 subunits MT-CO1, MT-CO2 and MT-CO3, encoded in the mitochondrial DNA, and 11 supernumerary subunits COX4I, COX5A, COX5B, COX6A, COX6B, COX6C, COX7A, COX7B, COX7C, COX8 and NDUFA4, which are encoded in the nuclear genome. The complex exists as a monomer or a dimer and forms supercomplexes (SCs) in the inner mitochondrial membrane with NADH-ubiquinone oxidoreductase (complex I, CI) and ubiquinol-cytochrome c oxidoreductase (cytochrome b-c1 complex, complex III, CIII), resulting in different assemblies (supercomplex SCI(1)III(2)IV(1) and megacomplex MCI(2)III(2)IV(2)).

Its subcellular location is the mitochondrion inner membrane. It participates in energy metabolism; oxidative phosphorylation. Component of the cytochrome c oxidase, the last enzyme in the mitochondrial electron transport chain which drives oxidative phosphorylation. The respiratory chain contains 3 multisubunit complexes succinate dehydrogenase (complex II, CII), ubiquinol-cytochrome c oxidoreductase (cytochrome b-c1 complex, complex III, CIII) and cytochrome c oxidase (complex IV, CIV), that cooperate to transfer electrons derived from NADH and succinate to molecular oxygen, creating an electrochemical gradient over the inner membrane that drives transmembrane transport and the ATP synthase. Cytochrome c oxidase is the component of the respiratory chain that catalyzes the reduction of oxygen to water. Electrons originating from reduced cytochrome c in the intermembrane space (IMS) are transferred via the dinuclear copper A center (CU(A)) of subunit 2 and heme A of subunit 1 to the active site in subunit 1, a binuclear center (BNC) formed by heme A3 and copper B (CU(B)). The BNC reduces molecular oxygen to 2 water molecules using 4 electrons from cytochrome c in the IMS and 4 protons from the mitochondrial matrix. The protein is Cytochrome c oxidase subunit 6C-2 (Cox6c2) of Rattus norvegicus (Rat).